The following is a 120-amino-acid chain: Large ribosomal subunit protein uL22 (120 aa).

It belongs to the universal ribosomal protein uL22 family. As to quaternary structure, part of the 50S ribosomal subunit.

This protein binds specifically to 23S rRNA; its binding is stimulated by other ribosomal proteins, e.g. L4, L17, and L20. It is important during the early stages of 50S assembly. It makes multiple contacts with different domains of the 23S rRNA in the assembled 50S subunit and ribosome. Its function is as follows. The globular domain of the protein is located near the polypeptide exit tunnel on the outside of the subunit, while an extended beta-hairpin is found that lines the wall of the exit tunnel in the center of the 70S ribosome. This chain is Large ribosomal subunit protein uL22, found in Corynebacterium glutamicum (strain R).